Reading from the N-terminus, the 248-residue chain is 3,4-dihydroxyphthalate decarboxylase (248 aa).

Residue Glu90 is the Proton donor/acceptor of the active site. Residues Glu90, His109, His111, and His177 each coordinate a divalent metal cation.

The protein belongs to the aldolase class II family. A divalent metal cation is required as a cofactor.

It catalyses the reaction 3,4-dihydroxyphthalate + H(+) = 3,4-dihydroxybenzoate + CO2. The protein operates within xenobiotic degradation; phthalate degradation. Functionally, catalyzes the decarboxylation of 3,4-dihydroxyphthalate to protocatechuate (3,4-dihydroxybenzoate) during phthalate metabolism. The polypeptide is 3,4-dihydroxyphthalate decarboxylase (Arthrobacter keyseri).